The primary structure comprises 1020 residues: Protein SCAR3 (1020 aa).

Disordered regions lie at residues 167–198 (NLSQ…DMSR), 351–382 (DEKP…LRKR), and 802–827 (DYLS…GRKE). Basic residues predominate over residues 174-191 (KFQKDKKHCKMKKKKTSS). The span at 365–382 (FHSKDNENDKSESGLRKR) shows a compositional bias: basic and acidic residues. Residues 802-814 (DYLSDNHSLSNSE) are compositionally biased toward polar residues. Residues 954–972 (ETGDFLQQIRTQQFNLRPV) enclose the WH2 domain.

The protein belongs to the SCAR/WAVE family. In terms of assembly, binds BRK1. Interacts with SPK1, ABI1, ABI2, ABI3 and ABI4. As to expression, expressed in expanding cotyledons, expanding leaves and expanding siliques containing developing embryos. Detected in unopened flower buds. Reduced expression in mature leaves and mature cotyledons.

It is found in the cytoplasm. The protein resides in the cytoskeleton. Involved in regulation of actin and microtubule organization. Part of a WAVE complex that activates the Arp2/3 complex. Regulates trichome branch positioning and expansion. This is Protein SCAR3 (SCAR3) from Arabidopsis thaliana (Mouse-ear cress).